The sequence spans 160 residues: S-ribosylhomocysteine lyase (160 aa).

The Fe cation site is built by His57, His61, and Cys127.

It belongs to the LuxS family. As to quaternary structure, homodimer. Requires Fe cation as cofactor.

The enzyme catalyses S-(5-deoxy-D-ribos-5-yl)-L-homocysteine = (S)-4,5-dihydroxypentane-2,3-dione + L-homocysteine. Involved in the synthesis of autoinducer 2 (AI-2) which is secreted by bacteria and is used to communicate both the cell density and the metabolic potential of the environment. The regulation of gene expression in response to changes in cell density is called quorum sensing. Catalyzes the transformation of S-ribosylhomocysteine (RHC) to homocysteine (HC) and 4,5-dihydroxy-2,3-pentadione (DPD). The sequence is that of S-ribosylhomocysteine lyase from Streptococcus thermophilus (strain CNRZ 1066).